Reading from the N-terminus, the 105-residue chain is Tyrosine-protein phosphatase 12 (105 aa).

A Tyrosine-protein phosphatase domain is found at Trp-1–Phe-105. Position 84 (Asp-84) interacts with substrate.

Belongs to the protein-tyrosine phosphatase family.

The catalysed reaction is O-phospho-L-tyrosyl-[protein] + H2O = L-tyrosyl-[protein] + phosphate. This is Tyrosine-protein phosphatase 12 (STY-12) from Styela plicata (Wrinkled sea squirt).